Reading from the N-terminus, the 254-residue chain is 3-deoxy-manno-octulosonate cytidylyltransferase (254 aa).

The protein belongs to the KdsB family.

It is found in the cytoplasm. It carries out the reaction 3-deoxy-alpha-D-manno-oct-2-ulosonate + CTP = CMP-3-deoxy-beta-D-manno-octulosonate + diphosphate. Its pathway is nucleotide-sugar biosynthesis; CMP-3-deoxy-D-manno-octulosonate biosynthesis; CMP-3-deoxy-D-manno-octulosonate from 3-deoxy-D-manno-octulosonate and CTP: step 1/1. The protein operates within bacterial outer membrane biogenesis; lipopolysaccharide biosynthesis. Its function is as follows. Activates KDO (a required 8-carbon sugar) for incorporation into bacterial lipopolysaccharide in Gram-negative bacteria. In Pseudomonas syringae pv. tomato (strain ATCC BAA-871 / DC3000), this protein is 3-deoxy-manno-octulosonate cytidylyltransferase.